Consider the following 167-residue polypeptide: Phosphopantetheine adenylyltransferase (167 aa).

Substrate is bound at residue Thr-13. ATP is bound by residues 13–14 (TF) and His-21. Substrate is bound by residues Lys-45, Leu-78, and Arg-92. ATP-binding positions include 93 to 95 (GLR), Glu-103, and 128 to 134 (TQFISSS).

The protein belongs to the bacterial CoaD family. As to quaternary structure, homohexamer. It depends on Mg(2+) as a cofactor.

It is found in the cytoplasm. It carries out the reaction (R)-4'-phosphopantetheine + ATP + H(+) = 3'-dephospho-CoA + diphosphate. It functions in the pathway cofactor biosynthesis; coenzyme A biosynthesis; CoA from (R)-pantothenate: step 4/5. Functionally, reversibly transfers an adenylyl group from ATP to 4'-phosphopantetheine, yielding dephospho-CoA (dPCoA) and pyrophosphate. In Wolbachia sp. subsp. Brugia malayi (strain TRS), this protein is Phosphopantetheine adenylyltransferase.